Here is a 77-residue protein sequence, read N- to C-terminus: uncharacterized protein (77 aa).

This is an uncharacterized protein from Vaccinia virus (strain Western Reserve) (VACV).